An 840-amino-acid polypeptide reads, in one-letter code: Aconitase AMT8 (840 aa).

Aspartate 258–histidine 260 is a binding site for substrate. [4Fe-4S] cluster is bound by residues cysteine 450, cysteine 513, and cysteine 516. Substrate is bound by residues arginine 536, arginine 541, and serine 709 to arginine 710.

Belongs to the aconitase/IPM isomerase family.

It functions in the pathway mycotoxin biosynthesis. In terms of biological role, aconitase; part of the gene clusters that mediate the biosynthesis of AM-toxins, host-selective toxins (HSTs) causing Alternaria blotch on apple, a worldwide distributed disease. AM-toxins are cyclic depsipeptides containing the 3 residues 2-hydroxy-isovaleric acid (2-HIV), dehydroalanine, L-alanine which are common for all 3 AM-toxins I to III. The fourth precursor is L-alpha-amino-methoxyphenyl-valeric acid (L-Amv) for AM-toxin I, L-alpha-amino-phenyl-valeric acid (L-Apv) for AM-toxin II, and L-alpha-amino-hydroxyphenyl-valeric acid (L-Ahv) for AM-toxin III. AM-toxins have two target sites for affecting susceptible apple cells; they cause invagination of the plasma membrane and electrolyte loss and chloroplast disorganization. The non-ribosomal peptide synthetase AMT1 contains 4 catalytic modules and is responsible for activation of each residue in AM-toxin. The aldo-keto reductase AMT2 catalyzes the conversion of 2-keto-isovaleric acid (2-KIV) to 2-hydroxy-isovaleric acid (2-HIV), one of the precursor residues incorporated by AMT1 during AM-toxin biosynthesis, by reduction of its ketone to an alcohol. The cytochrome P450 monooxygenase AMT3 and the thioesterase AMT4 are also important for AM-toxin production, but their exact function within the AM-toxin biosynthesis are not known yet. Up to 21 proteins (including AMT1 to AMT4) are predicted to be involved in AM-toxin biosynthesis since their expression ishighly up-regulated in AM-toxin-producing cultures. The sequence is that of Aconitase AMT8 from Alternaria alternata (Alternaria rot fungus).